Here is a 269-residue protein sequence, read N- to C-terminus: 2-keto-4-pentenoate hydratase (269 aa).

It belongs to the hydratase/decarboxylase family. MhpD subfamily. A divalent metal cation serves as cofactor.

The catalysed reaction is (S)-4-hydroxy-2-oxopentanoate = (2Z)-2-hydroxypenta-2,4-dienoate + H2O. Its pathway is aromatic compound metabolism; 3-phenylpropanoate degradation. Its function is as follows. Catalyzes the conversion of 2-hydroxypentadienoic acid (enolic form of 2-oxopent-4-enoate) to 4-hydroxy-2-ketopentanoic acid. This chain is 2-keto-4-pentenoate hydratase, found in Paraburkholderia xenovorans (strain LB400).